Consider the following 55-residue polypeptide: uncharacterized protein (55 aa).

The N-terminal stretch at 1-19 is a signal peptide; it reads MQILLVVRLVLLWLGGLSA.

This is an uncharacterized protein from Orgyia pseudotsugata multicapsid polyhedrosis virus (OpMNPV).